The sequence spans 360 residues: Mitogen-activated protein kinase 14 (360 aa).

The residue at position 2 (S2) is an N-acetylserine. A Phosphoserine modification is found at S2. T16 is modified (phosphothreonine). One can recognise a Protein kinase domain in the interval Y24 to F308. Residues V30–V38 and K53 each bind ATP. The residue at position 53 (K53) is an N6-acetyllysine. D150 acts as the Proton acceptor in catalysis. K152 is modified (N6-acetyllysine). T180 is subject to Phosphothreonine; by MAP2K3, MAP2K4, MAP2K6 and autocatalysis. The TXY motif lies at T180–Y182. At Y182 the chain carries Phosphotyrosine; by MAP2K3, MAP2K4, MAP2K6 and autocatalysis. T263 carries the post-translational modification Phosphothreonine. At Y323 the chain carries Phosphotyrosine; by ZAP70.

The protein belongs to the protein kinase superfamily. CMGC Ser/Thr protein kinase family. MAP kinase subfamily. Component of a signaling complex containing at least AKAP13, PKN1, MAPK14, ZAK and MAP2K3. Within this complex, AKAP13 interacts directly with PKN1, which in turn recruits MAPK14, MAP2K3 and ZAK. Binds to a kinase interaction motif within the protein tyrosine phosphatase, PTPRR. This interaction retains MAPK14 in the cytoplasm and prevents nuclear accumulation. Interacts with SPAG9 and GADD45A. Interacts with CDC25B, CDC25C, DUSP1, DUSP10, DUSP16, NP60, SUPT20H and TAB1. Interacts with casein kinase II subunits CSNK2A1 and CSNK2B. Interacts with PPM1D. Interacts with CDK5RAP3; recruits PPM1D to MAPK14 and may regulate its dephosphorylation. Interacts with DUSP2; this interaction does not lead to catalytic activation of DUSP2 and dephosphrylation of MAPK14. Mg(2+) serves as cofactor. In terms of processing, dually phosphorylated on Thr-180 and Tyr-182 by the MAP2Ks MAP2K3/MKK3, MAP2K4/MKK4 and MAP2K6/MKK6 in response to inflammatory citokines, environmental stress or growth factors, which activates the enzyme. Dual phosphorylation can also be mediated by TAB1-mediated autophosphorylation. TCR engagement in T-cells also leads to Tyr-323 phosphorylation by ZAP70. Dephosphorylated and inactivated by DUPS1, DUSP10 and DUSP16. PPM1D also mediates dephosphorylation and inactivation of MAPK14. Acetylated at Lys-53 and Lys-152 by KAT2B and EP300. Acetylation at Lys-53 increases the affinity for ATP and enhances kinase activity. Lys-53 and Lys-152 are deacetylated by HDAC3. Post-translationally, ubiquitinated. Ubiquitination leads to degradation by the proteasome pathway.

The protein resides in the cytoplasm. It localises to the nucleus. The enzyme catalyses L-seryl-[protein] + ATP = O-phospho-L-seryl-[protein] + ADP + H(+). It catalyses the reaction L-threonyl-[protein] + ATP = O-phospho-L-threonyl-[protein] + ADP + H(+). Activated by cell stresses such as DNA damage, heat shock, osmotic shock, anisomycin and sodium arsenite, as well as pro-inflammatory stimuli such as bacterial lipopolysaccharide (LPS) and interleukin-1. Activation occurs through dual phosphorylation of Thr-180 and Tyr-182 by either of two dual specificity kinases, MAP2K3/MKK3 or MAP2K6/MKK6, and potentially also MAP2K4/MKK4, as well as by TAB1-mediated autophosphorylation. MAPK14 phosphorylated on both Thr-180 and Tyr-182 is 10-20-fold more active than MAPK14 phosphorylated only on Thr-180, whereas MAPK14 phosphorylated on Tyr-182 alone is inactive. whereas Thr-180 is necessary for catalysis, Tyr-182 may be required for auto-activation and substrate recognition. Phosphorylated at Tyr-323 by ZAP70 in an alternative activation pathway in response to TCR signaling in T-cells. This alternative pathway is inhibited by GADD45A. Inhibited by dual specificity phosphatases, such as DUSP1, DUSP10, and DUSP16. Specifically inhibited by the binding of pyridinyl-imidazole compounds, which are cytokine-suppressive anti-inflammatory drugs (CSAID). SB203580 is an inhibitor of MAPK14. Functionally, serine/threonine kinase which acts as an essential component of the MAP kinase signal transduction pathway. MAPK14 is one of the four p38 MAPKs which play an important role in the cascades of cellular responses evoked by extracellular stimuli such as pro-inflammatory cytokines or physical stress leading to direct activation of transcription factors. Accordingly, p38 MAPKs phosphorylate a broad range of proteins and it has been estimated that they may have approximately 200 to 300 substrates each. Some of the targets are downstream kinases which are activated through phosphorylation and further phosphorylate additional targets. RPS6KA5/MSK1 and RPS6KA4/MSK2 can directly phosphorylate and activate transcription factors such as CREB1, ATF1, the NF-kappa-B isoform RELA/NFKB3, STAT1 and STAT3, but can also phosphorylate histone H3 and the nucleosomal protein HMGN1. RPS6KA5/MSK1 and RPS6KA4/MSK2 play important roles in the rapid induction of immediate-early genes in response to stress or mitogenic stimuli, either by inducing chromatin remodeling or by recruiting the transcription machinery. On the other hand, two other kinase targets, MAPKAPK2/MK2 and MAPKAPK3/MK3, participate in the control of gene expression mostly at the post-transcriptional level, by phosphorylating ZFP36 (tristetraprolin) and ELAVL1, and by regulating EEF2K, which is important for the elongation of mRNA during translation. MKNK1/MNK1 and MKNK2/MNK2, two other kinases activated by p38 MAPKs, regulate protein synthesis by phosphorylating the initiation factor EIF4E2. MAPK14 also interacts with casein kinase II, leading to its activation through autophosphorylation and further phosphorylation of TP53/p53. In the cytoplasm, the p38 MAPK pathway is an important regulator of protein turnover. For example, CFLAR is an inhibitor of TNF-induced apoptosis whose proteasome-mediated degradation is regulated by p38 MAPK phosphorylation. In a similar way, MAPK14 phosphorylates the ubiquitin ligase SIAH2, regulating its activity towards EGLN3. MAPK14 may also inhibit the lysosomal degradation pathway of autophagy by interfering with the intracellular trafficking of the transmembrane protein ATG9. Another function of MAPK14 is to regulate the endocytosis of membrane receptors by different mechanisms that impinge on the small GTPase RAB5A. In addition, clathrin-mediated EGFR internalization induced by inflammatory cytokines and UV irradiation depends on MAPK14-mediated phosphorylation of EGFR itself as well as of RAB5A effectors. Ectodomain shedding of transmembrane proteins is regulated by p38 MAPKs as well. In response to inflammatory stimuli, p38 MAPKs phosphorylate the membrane-associated metalloprotease ADAM17. Such phosphorylation is required for ADAM17-mediated ectodomain shedding of TGF-alpha family ligands, which results in the activation of EGFR signaling and cell proliferation. Another p38 MAPK substrate is FGFR1. FGFR1 can be translocated from the extracellular space into the cytosol and nucleus of target cells, and regulates processes such as rRNA synthesis and cell growth. FGFR1 translocation requires p38 MAPK activation. In the nucleus, many transcription factors are phosphorylated and activated by p38 MAPKs in response to different stimuli. Classical examples include ATF1, ATF2, ATF6, ELK1, PTPRH, DDIT3, TP53/p53 and MEF2C and MEF2A. The p38 MAPKs are emerging as important modulators of gene expression by regulating chromatin modifiers and remodelers. The promoters of several genes involved in the inflammatory response, such as IL6, IL8 and IL12B, display a p38 MAPK-dependent enrichment of histone H3 phosphorylation on 'Ser-10' (H3S10ph) in LPS-stimulated myeloid cells. This phosphorylation enhances the accessibility of the cryptic NF-kappa-B-binding sites marking promoters for increased NF-kappa-B recruitment. Phosphorylates CDC25B and CDC25C which is required for binding to 14-3-3 proteins and leads to initiation of a G2 delay after ultraviolet radiation. Phosphorylates TIAR following DNA damage, releasing TIAR from GADD45A mRNA and preventing mRNA degradation. The p38 MAPKs may also have kinase-independent roles, which are thought to be due to the binding to targets in the absence of phosphorylation. Protein O-Glc-N-acylation catalyzed by the OGT is regulated by MAPK14, and, although OGT does not seem to be phosphorylated by MAPK14, their interaction increases upon MAPK14 activation induced by glucose deprivation. This interaction may regulate OGT activity by recruiting it to specific targets such as neurofilament H, stimulating its O-Glc-N-acylation. Required in mid-fetal development for the growth of embryo-derived blood vessels in the labyrinth layer of the placenta. Also plays an essential role in developmental and stress-induced erythropoiesis, through regulation of EPO gene expression. Phosphorylates S100A9 at 'Thr-113'. This is Mitogen-activated protein kinase 14 from Canis lupus familiaris (Dog).